Here is a 300-residue protein sequence, read N- to C-terminus: 33 kDa chaperonin (300 aa).

2 cysteine pairs are disulfide-bonded: C235–C237 and C269–C272.

The protein belongs to the HSP33 family. Under oxidizing conditions two disulfide bonds are formed involving the reactive cysteines. Under reducing conditions zinc is bound to the reactive cysteines and the protein is inactive.

It localises to the cytoplasm. In terms of biological role, redox regulated molecular chaperone. Protects both thermally unfolding and oxidatively damaged proteins from irreversible aggregation. Plays an important role in the bacterial defense system toward oxidative stress. In Pseudomonas syringae pv. syringae (strain B728a), this protein is 33 kDa chaperonin.